The sequence spans 288 residues: Sulfhydrogenase 2 subunit gamma (288 aa).

One can recognise an FAD-binding FR-type domain in the interval 4 to 103; the sequence is YRSYDARIIE…RGPYGNGFPM (100 aa). Cys-250, Cys-255, Cys-258, and Cys-270 together coordinate [2Fe-2S] cluster.

Dimer of heterotetramer of alpha, beta, gamma and delta subunits. The nickel-containing alpha and delta subunits constitute the hydrogenase activity. The beta and gamma subunits (flavin-containing dimer) constitute the sulfur reductase activity. It depends on FAD as a cofactor. [2Fe-2S] cluster serves as cofactor.

The protein resides in the cytoplasm. It carries out the reaction n sulfur + H2 = (n-1) sulfur + hydrogen sulfide + H(+). In terms of biological role, part of a bifunctional enzyme complex that functions as a hydrogen-evolving hydrogenase with sulfur-reducing activity. May play a role in hydrogen cycling during fermentative growth. Activity exhibited with NAD in addition to NADPH. The beta and gamma subunits form the sulfur-reducing component that catalyzes the cytoplasmic production of hydrogen sulfide in the presence of elemental sulfur. The protein is Sulfhydrogenase 2 subunit gamma of Pyrococcus furiosus (strain ATCC 43587 / DSM 3638 / JCM 8422 / Vc1).